Consider the following 670-residue polypeptide: Cyclic di-GMP phosphodiesterase PdeA (670 aa).

The EAL domain occupies 428-670 (QNKIFQYILK…GFLWHKPEPI (243 aa)).

It catalyses the reaction 3',3'-c-di-GMP + H2O = 5'-phosphoguanylyl(3'-&gt;5')guanosine + H(+). Phosphodiesterase (PDE) that catalyzes the hydrolysis of cyclic diguanylate (c-di-GMP) to pGpG. The polypeptide is Cyclic di-GMP phosphodiesterase PdeA (Borreliella burgdorferi (strain ATCC 35210 / DSM 4680 / CIP 102532 / B31) (Borrelia burgdorferi)).